Consider the following 166-residue polypeptide: SUMO-conjugating enzyme UBC9 (166 aa).

One can recognise a UBC core domain in the interval 4–157; that stretch reads IAAGRLAEER…VKKEAVKYAA (154 aa). C93 serves as the catalytic Glycyl thioester intermediate.

This sequence belongs to the ubiquitin-conjugating enzyme family. Interacts with brd-1 and rad-51. Interacts with smo-1 and sop-2. Interacts with bet-1 (via BROMO domain 2). Interacts with isoforms 1 and 2 of X-box-binding protein xbp-1.

It is found in the nucleus envelope. The protein operates within protein modification; protein sumoylation. Its function is as follows. Accepts the ubiquitin-like protein smo-1 from the aos-1-uba-2 E1 complex and catalyzes its covalent attachment to other proteins with the help of an E3 ligase such as gei-17. Required to sumoylate the ETS transcription factor lin-1, Polycomb protein sop-2, and intermediate filament proteins, such as ifb-1. Required for embryonic development, fertility, vulval morphogenesis, inhibition of vulval cell fates, lifespan, and neuromuscular activity. The protein is SUMO-conjugating enzyme UBC9 of Caenorhabditis elegans.